Consider the following 224-residue polypeptide: Histone H1.03 (224 aa).

2 stretches are compositionally biased toward low complexity: residues 1–22 and 30–42; these read MAETAPVAAPDVAAAPTPAKAA and AAGGAKARKPAGP. Disordered regions lie at residues 1 to 43 and 99 to 224; these read MAET…AGPS and QTKG…PKKK. The region spanning 40-113 is the H15 domain; that stretch reads AGPSVTELIT…GASGSFRLSK (74 aa). Composition is skewed to basic residues over residues 122–137, 145–162, 170–188, and 197–224; these read APKKKTPAAKPKKPAA, KKPKKAVAVKKSPKKAKK, KAAKSPKKVTKAAKPKKAV, and KAVKPKAAKPKATKPKAAKAKKAAPKKK.

This sequence belongs to the histone H1/H5 family.

It is found in the nucleus. The protein resides in the chromosome. In terms of biological role, histones H1 are necessary for the condensation of nucleosome chains into higher-order structures. This Gallus gallus (Chicken) protein is Histone H1.03.